Consider the following 542-residue polypeptide: Chaperonin GroEL 2 (542 aa).

Residues 29 to 32 (TLGP), 86 to 90 (DGTTT), glycine 413, 477 to 479 (NAA), and aspartate 493 contribute to the ATP site.

Belongs to the chaperonin (HSP60) family. In terms of assembly, forms a cylinder of 14 subunits composed of two heptameric rings stacked back-to-back. Interacts with the co-chaperonin GroES.

The protein localises to the cytoplasm. It carries out the reaction ATP + H2O + a folded polypeptide = ADP + phosphate + an unfolded polypeptide.. Its function is as follows. Together with its co-chaperonin GroES, plays an essential role in assisting protein folding. The GroEL-GroES system forms a nano-cage that allows encapsulation of the non-native substrate proteins and provides a physical environment optimized to promote and accelerate protein folding. In Kineococcus radiotolerans (strain ATCC BAA-149 / DSM 14245 / SRS30216), this protein is Chaperonin GroEL 2.